The primary structure comprises 78 residues: Ferredoxin (78 aa).

2 consecutive 4Fe-4S ferredoxin-type domains span residues 2-29 and 30-59; these read FVITSPCIGEKAADCVETCPVDAIHEGP and DQYYIDPDLCIDCAACEPVCPVNAIYQEEF. 2 residues coordinate [3Fe-4S] cluster: Cys-8 and Cys-16. Positions 20, 39, 42, and 45 each coordinate [4Fe-4S] cluster. A [3Fe-4S] cluster-binding site is contributed by Cys-49.

[3Fe-4S] cluster is required as a cofactor. It depends on [4Fe-4S] cluster as a cofactor.

Ferredoxins are iron-sulfur proteins that transfer electrons in a wide variety of metabolic reactions. This chain is Ferredoxin, found in Alicyclobacillus acidocaldarius subsp. acidocaldarius (Bacillus acidocaldarius).